The primary structure comprises 240 residues: Ribonuclease PH (240 aa).

Phosphate contacts are provided by residues R87 and 125-127; that span reads GTR.

Belongs to the RNase PH family. In terms of assembly, homohexameric ring arranged as a trimer of dimers.

It catalyses the reaction tRNA(n+1) + phosphate = tRNA(n) + a ribonucleoside 5'-diphosphate. In terms of biological role, phosphorolytic 3'-5' exoribonuclease that plays an important role in tRNA 3'-end maturation. Removes nucleotide residues following the 3'-CCA terminus of tRNAs; can also add nucleotides to the ends of RNA molecules by using nucleoside diphosphates as substrates, but this may not be physiologically important. Probably plays a role in initiation of 16S rRNA degradation (leading to ribosome degradation) during starvation. In Stutzerimonas stutzeri (strain A1501) (Pseudomonas stutzeri), this protein is Ribonuclease PH.